The chain runs to 691 residues: L-type lectin-domain containing receptor kinase S.6 (691 aa).

An N-terminal signal peptide occupies residues 1-25; sequence MNHHHYSLVIFHLILFLSLDFPTLS. Topologically, residues 26–311 are extracellular; that stretch reads HRFSPPLQNL…VVGLKIPVWS (286 aa). Residues 27-257 form a legume-lectin like region; it reads RFSPPLQNLT…LHIVERWKFR (231 aa). Asn34 and Asn89 each carry an N-linked (GlcNAc...) asparagine glycan. Residues 312-332 form a helical membrane-spanning segment; the sequence is LLPGLAAIVILVAFIVFSLIC. Residues 333-691 lie on the Cytoplasmic side of the membrane; sequence GKKRISEEAD…PWMTPKSHFS (359 aa). Residues 366–653 form the Protein kinase domain; it reads FNENAIVGQG…IRGEAPLPVL (288 aa). ATP is bound by residues 372-380 and Lys394; that span reads VGQGASATV. The active-site Proton acceptor is the Asp500.

This sequence in the C-terminal section; belongs to the protein kinase superfamily. Ser/Thr protein kinase family. In the N-terminal section; belongs to the leguminous lectin family.

Its subcellular location is the cell membrane. It carries out the reaction L-seryl-[protein] + ATP = O-phospho-L-seryl-[protein] + ADP + H(+). The enzyme catalyses L-threonyl-[protein] + ATP = O-phospho-L-threonyl-[protein] + ADP + H(+). In terms of biological role, involved in resistance response to the pathogenic oomycetes Phytophthora infestans and Phytophthora capsici and to the pathogenic bacteria Pseudomonas syringae. This Arabidopsis thaliana (Mouse-ear cress) protein is L-type lectin-domain containing receptor kinase S.6.